Here is a 110-residue protein sequence, read N- to C-terminus: Nucleoid-associated protein Ent638_0951 (110 aa).

This sequence belongs to the YbaB/EbfC family. In terms of assembly, homodimer.

The protein localises to the cytoplasm. The protein resides in the nucleoid. Functionally, binds to DNA and alters its conformation. May be involved in regulation of gene expression, nucleoid organization and DNA protection. The sequence is that of Nucleoid-associated protein Ent638_0951 from Enterobacter sp. (strain 638).